We begin with the raw amino-acid sequence, 522 residues long: BAR/IMD domain-containing adapter protein 2-like 2 (522 aa).

Positions 1–239 (MAPEMDQFYR…HSPGLLGPAL (239 aa)) constitute an IMD domain. Disordered stretches follow at residues 220–325 (SEAS…GGGG) and 404–502 (PMSP…GTNP). A phosphoserine mark is found at serine 231, serine 272, and serine 303. The segment covering 297–317 (RTPSASSLYASSTQRSRSNSF) has biased composition (polar residues). The SH3 domain occupies 324-387 (GGARRVRALV…PEAYVKPVEE (64 aa)). Positions 443-456 (SQSRSRTPSRVPSR) are enriched in low complexity. Over residues 457-466 (APSPAPPPLP) the composition is skewed to pro residues. Phosphoserine occurs at positions 472 and 475.

As to expression, expressed in the epithelial layer of the intestine and in the kidney.

Its subcellular location is the cell membrane. The protein localises to the cell junction. It localises to the cytoplasmic vesicle membrane. Phosphoinositides-binding protein that induces the formation of planar or gently curved membrane structures. Binds to phosphoinositides, including to phosphatidylinositol 4,5-bisphosphate (PtdIns(4,5)P2) headgroups. There seems to be no clear preference for a specific phosphoinositide. The sequence is that of BAR/IMD domain-containing adapter protein 2-like 2 (Baiap2l2) from Mus musculus (Mouse).